A 250-amino-acid polypeptide reads, in one-letter code: MTGTSILQFPVLSEGVLLKRYKRFLADVELKDGQVVTVHCANTGPMKGVLHPGGRVRVRHAPSPKRKLAWTWEQAEIPSSDGTLCWAGINTALPNKLIRALIEAGGLKDQLGPIKTIRAEVPYGLNRRSRIDLLLTPDDSADDQRPIYVEVKNTTWSHGDVALFPDTVTERGQKHLEELTALLPDARGVLVPCLSRPDVIAFAPGDSADPRYGDLFRQAMAAGVEVLPCCFSFYEDQIQWEGVRTVCPRL.

This sequence belongs to the SfsA family.

The sequence is that of Sugar fermentation stimulation protein homolog from Synechococcus sp. (strain CC9311).